A 461-amino-acid chain; its full sequence is Photosystem II CP43 reaction center protein (461 aa).

A propeptide spanning residues 1–2 (ME) is cleaved from the precursor. An N-acetylthreonine modification is found at Thr3. A Phosphothreonine modification is found at Thr3. A run of 5 helical transmembrane segments spans residues 57–81 (LFEV…PHIA), 122–143 (LIGP…KDKN), 166–188 (KAMY…RIIT), 243–263 (TPWP…LSYS), and 279–300 (WFNN…ASQA). Glu355 contacts [CaMn4O5] cluster. The helical transmembrane segment at 435–459 (RARAAAAGFEKGIDRVDEPVLSMRP) threads the bilayer.

This sequence belongs to the PsbB/PsbC family. PsbC subfamily. In terms of assembly, PSII is composed of 1 copy each of membrane proteins PsbA, PsbB, PsbC, PsbD, PsbE, PsbF, PsbH, PsbI, PsbJ, PsbK, PsbL, PsbM, PsbT, PsbX, PsbY, PsbZ, Psb30/Ycf12, at least 3 peripheral proteins of the oxygen-evolving complex and a large number of cofactors. It forms dimeric complexes. Binds multiple chlorophylls and provides some of the ligands for the Ca-4Mn-5O cluster of the oxygen-evolving complex. It may also provide a ligand for a Cl- that is required for oxygen evolution. PSII binds additional chlorophylls, carotenoids and specific lipids. is required as a cofactor.

It is found in the plastid. It localises to the chloroplast thylakoid membrane. One of the components of the core complex of photosystem II (PSII). It binds chlorophyll and helps catalyze the primary light-induced photochemical processes of PSII. PSII is a light-driven water:plastoquinone oxidoreductase, using light energy to abstract electrons from H(2)O, generating O(2) and a proton gradient subsequently used for ATP formation. This is Photosystem II CP43 reaction center protein from Chlamydomonas moewusii (Chlamydomonas eugametos).